We begin with the raw amino-acid sequence, 77 residues long: Exodeoxyribonuclease 7 small subunit (77 aa).

The protein belongs to the XseB family. Heterooligomer composed of large and small subunits.

The protein localises to the cytoplasm. It carries out the reaction Exonucleolytic cleavage in either 5'- to 3'- or 3'- to 5'-direction to yield nucleoside 5'-phosphates.. Functionally, bidirectionally degrades single-stranded DNA into large acid-insoluble oligonucleotides, which are then degraded further into small acid-soluble oligonucleotides. In Clostridium acetobutylicum (strain ATCC 824 / DSM 792 / JCM 1419 / IAM 19013 / LMG 5710 / NBRC 13948 / NRRL B-527 / VKM B-1787 / 2291 / W), this protein is Exodeoxyribonuclease 7 small subunit.